A 482-amino-acid chain; its full sequence is CBL-interacting serine/threonine-protein kinase 23 (482 aa).

Positions 1–25 are enriched in low complexity; that stretch reads MASRTTPSRSTPSRSTPSGSSSGGR. The disordered stretch occupies residues 1-29; it reads MASRTTPSRSTPSRSTPSGSSSGGRTRVG. Positions 31 to 286 constitute a Protein kinase domain; it reads YELGRTLGEG…FAEVIENEWF (256 aa). Residues 37 to 45 and lysine 60 contribute to the ATP site; that span reads LGEGTFAKV. Aspartate 154 acts as the Proton acceptor in catalysis. Residues 172 to 201 are activation loop; that stretch reads DFGLSALPQQVREDGLLHTTCGTPNYVAPE. Phosphoserine is present on serine 176. At threonine 190 the chain carries Phosphothreonine. Residues 328 to 352 enclose the NAF domain; it reads KTPVTMNAFELISTSQGLNLGSLFE. The tract at residues 359–388 is PPI; the sequence is KRKTRFTSKSSANEIVTKIEAAAAPMGFDV. Positions 459–482 are disordered; sequence KEEGTDGGGTNGAMANRTIAKQST.

Belongs to the protein kinase superfamily. CAMK Ser/Thr protein kinase family. SNF1 subfamily. Part of a K(+)-channel calcium-sensing kinase/phosphatase complex composed by a calcium sensor CBL (CBL1, CBL2, CBL3 or CBL9), a kinase CIPK (CIPK6, CIPK16 or CIPK23), a phosphatase PP2C (AIP1) and a K(+)-channel (AKT1). Interacts with AKT1, CBL1, CBL2, CBL3, CBL5, CBL8, CBL9 and NRT1.1. Mn(2+) serves as cofactor. In terms of processing, autophosphorylated. In terms of tissue distribution, in seedlings, mostly in vascular bundles, and in roots, especially in cortex and endodermis cells. In adult plants, mostly expressed in flowers, and, to a lower extent, in roots, leaves, stems and siliques, particularly in vascular tissues. Also detected in guard cells and root hairs.

The protein localises to the cell membrane. The catalysed reaction is L-seryl-[protein] + ATP = O-phospho-L-seryl-[protein] + ADP + H(+). It catalyses the reaction L-threonyl-[protein] + ATP = O-phospho-L-threonyl-[protein] + ADP + H(+). In terms of biological role, CIPK serine-threonine protein kinases interact with CBL proteins. Binding of a CBL protein to the regulatory NAF domain of CIPK protein leads to activation of the kinase in a calcium-dependent manner. Downstream of CBL1, CBL2, CBL3 and CBL9, regulates by phosphorylation the K(+) conductance and uptake of AKT1 in low K(+) condition, in response to calcium signaling and during the stomatal opening regulation by monitoring the turgor pressure in guard cells. In response to low nitrate concentration, phosphorylates NRT1.1, switching it from a low-affinity nitrate transporter to a high-affinity transporter. Confers tolerance to low potassium conditions. Involved in drought sensitivity and leaf transpiration. In Arabidopsis thaliana (Mouse-ear cress), this protein is CBL-interacting serine/threonine-protein kinase 23 (CIPK23).